A 727-amino-acid polypeptide reads, in one-letter code: Glycerol-3-phosphate dehydrogenase, mitochondrial (727 aa).

A mitochondrion-targeting transit peptide spans 1 to 42; sequence MAFQKAVKRTVLVCGGALATVLGLSQCSHYRRKQVNLACLKA. Residue 71–99 coordinates FAD; the sequence is DILVIGGGATGSGCALDAVTRGLKTALVE. Position 601 is a phosphotyrosine (Tyr601). EF-hand domains are found at residues 623-658 and 659-694; these read SDIERYTKRFHKFDADEKGFITIVDVQRVLENINVK and IDENTLHEILSEVDLNKNGQVELNEFLQLMSAIQKG. Ca(2+) is bound by residues Asp672, Asn674, Asn676, Gln678, and Glu683.

Belongs to the FAD-dependent glycerol-3-phosphate dehydrogenase family. FAD is required as a cofactor.

It localises to the mitochondrion. It carries out the reaction a quinone + sn-glycerol 3-phosphate = dihydroxyacetone phosphate + a quinol. Its pathway is polyol metabolism; glycerol degradation via glycerol kinase pathway; glycerone phosphate from sn-glycerol 3-phosphate (aerobic route): step 1/1. With respect to regulation, calcium-binding enhance the activity of the enzyme. Functionally, calcium-responsive mitochondrial glycerol-3-phosphate dehydrogenase which seems to be a key component of the pancreatic beta-cell glucose-sensing device. The chain is Glycerol-3-phosphate dehydrogenase, mitochondrial (GPD2) from Mesocricetus auratus (Golden hamster).